Reading from the N-terminus, the 406-residue chain is Sensor histidine kinase YxjM (406 aa).

Over 1 to 13 (MNGQTPARHYYKK) the chain is Cytoplasmic. The chain crosses the membrane as a helical span at residues 14–34 (LVPSLILILNCIQFLSHPTKA). Residues 35-36 (DP) lie on the Extracellular side of the membrane. The chain crosses the membrane as a helical span at residues 37–57 (ILLAFVFAVYLAFIWIIPYVA). A topological domain (cytoplasmic) is located at residue serine 58. Helical transmembrane passes span 59-79 (TAVS…FWAV) and 80-100 (SGQE…YAAF). A topological domain (cytoplasmic) is located at residue arginine 101. A helical membrane pass occupies residues 102–122 (LPSRLSLIFTACLIGGNILLL). Over 123–125 (SSQ) the chain is Extracellular. A helical transmembrane segment spans residues 126-146 (GGSLNTIISNISIMLGLYVLF). Residues 147–406 (SSMRFRREAR…TNKEQKDEQR (260 aa)) are Cytoplasmic-facing. A Histidine kinase domain is found at 209-396 (DIHDSIGHEL…KIELSLPLMT (188 aa)). Histidine 211 bears the Phosphohistidine; by autocatalysis mark.

The protein resides in the cell membrane. The enzyme catalyses ATP + protein L-histidine = ADP + protein N-phospho-L-histidine.. Probable member of the two-component regulatory system YxjM/YxjL. May activate YxjL by phosphorylation. This is Sensor histidine kinase YxjM (yxjM) from Bacillus subtilis (strain 168).